Consider the following 341-residue polypeptide: MNKLILISLIASLYQVEVDAHGYMTFPIARQRRCSAAGGNWYPVGGGGIQDPMCRAAYQNVFNKVLNSNGGDVIDASEAANYMYTQDNEYAALAGPDYTNICHIQQRVVPSYLCAAGASDWSIRPFGDKSGMDLPGSWTPTIIQLSDNQQSNVVMELEFCPTAVHDPSYYEVYITNPSFNVYTDNVVWANLDLIYNNTVTLRPKLPESTCAANSMVYRFEVSIPVRPSQFVLYVRWQRIDPVGEGFYNCVDMKFKYSEGPDEEDIIEPEYEVDNEAECFAYRTNSGNVNVNPLQENKYMAYANKAIRNINTHSNGCSRNRNNKNNYNKYYSKTYNYNQNRK.

The N-terminal stretch at 1–20 is a signal peptide; it reads MNKLILISLIASLYQVEVDA.

In terms of assembly, homodimer; disulfide-linked.

Its function is as follows. This protein is a spindle body protein. This chain is Spindolin (SPH), found in Choristoneura biennis entomopoxvirus (CbEPV).